The chain runs to 21 residues: Large ribosomal subunit protein uL29 (21 aa).

This sequence belongs to the universal ribosomal protein uL29 family.

The sequence is that of Large ribosomal subunit protein uL29 (rpmC) from Brevundimonas diminuta (Pseudomonas diminuta).